The chain runs to 73 residues: Beta-defensin 50 (73 aa).

An N-terminal signal peptide occupies residues 1–23 (MKTLCFLLLTSGLLYLMVKGVGS). Disulfide bonds link Cys34–Cys63 and Cys46–Cys64.

This sequence belongs to the beta-defensin family. Highly expressed in prostate. Not expressed in uterus, epididymis, ovary, testis, spleen, submaxillary gland, thymus, thyroid, pancreas, smooth muscle, skeletal muscle, heart, kidney, lung, liver, eye and brain.

It localises to the secreted. Functionally, has bactericidal activity. The chain is Beta-defensin 50 (Defb50) from Mus musculus (Mouse).